The chain runs to 206 residues: Large ribosomal subunit protein uL4 (206 aa).

The tract at residues 43–78 (ARSGNRKQKDREEVHHTTKKPWRQKGTGRARAGMSS) is disordered. Residues 49–58 (KQKDREEVHH) show a composition bias toward basic and acidic residues. The span at 59–70 (TTKKPWRQKGTG) shows a compositional bias: basic residues.

It belongs to the universal ribosomal protein uL4 family. In terms of assembly, part of the 50S ribosomal subunit.

Functionally, one of the primary rRNA binding proteins, this protein initially binds near the 5'-end of the 23S rRNA. It is important during the early stages of 50S assembly. It makes multiple contacts with different domains of the 23S rRNA in the assembled 50S subunit and ribosome. In terms of biological role, forms part of the polypeptide exit tunnel. The sequence is that of Large ribosomal subunit protein uL4 from Janthinobacterium sp. (strain Marseille) (Minibacterium massiliensis).